A 321-amino-acid chain; its full sequence is CRISPR system ring nuclease SSO1393 (321 aa).

Belongs to the cOA ring nuclease family. Homodimer. The cofactor is Does not require a metal cofactor..

It localises to the cytoplasm. The catalysed reaction is cyclic tetraadenylate = 2 5'-hydroxy-diadenylate 2',3'-cylic phosphate. CRISPR (clustered regularly interspaced short palindromic repeat) is an adaptive immune system that provides protection against mobile genetic elements (viruses, transposable elements and conjugative plasmids). CRISPR clusters contain spacers, sequences complementary to antecedent mobile elements, and target invading nucleic acids. CRISPR clusters are transcribed and processed into CRISPR RNA (crRNA). A nuclease that degrades cyclic oligoadenylates (cOA), second messengers that induce an antiviral state important for defense against invading nucleic acids. Destruction of cOA deactivates the Csx1 ribonuclease, preventing uncontrolled degradation of cellular RNA. Slowly degrades cA4 (a tetraadenylate ring) into first a linear tetraadenylate product and secondly into a linear diadenylate product with 5'-OH and 2',3'-cyclic phosphate termini. Is 10-fold less active than SSO2081, suggesting it plays a minor role in cA4 degradation. There may be 2 active sites per homodimer. The protein is CRISPR system ring nuclease SSO1393 of Saccharolobus solfataricus (strain ATCC 35092 / DSM 1617 / JCM 11322 / P2) (Sulfolobus solfataricus).